An 87-amino-acid polypeptide reads, in one-letter code: Sec-independent protein translocase protein TatA (87 aa).

Residues Met-1 to Gly-21 form a helical membrane-spanning segment. The segment at Asn-54–Val-87 is disordered.

It belongs to the TatA/E family. The Tat system comprises two distinct complexes: a TatABC complex, containing multiple copies of TatA, TatB and TatC subunits, and a separate TatA complex, containing only TatA subunits. Substrates initially bind to the TatABC complex, which probably triggers association of the separate TatA complex to form the active translocon.

It localises to the cell inner membrane. Part of the twin-arginine translocation (Tat) system that transports large folded proteins containing a characteristic twin-arginine motif in their signal peptide across membranes. TatA could form the protein-conducting channel of the Tat system. This chain is Sec-independent protein translocase protein TatA, found in Photobacterium profundum (strain SS9).